The primary structure comprises 271 residues: RELT-like protein 1 (271 aa).

An N-terminal signal peptide occupies residues 1 to 23 (MAPRALPGSAVLAAAVFVGGAVS). The Extracellular segment spans residues 24-57 (SPLVAPDNGSSRTLHSRTETTPSPSNDTGNGHPE). The interval 28-53 (APDNGSSRTLHSRTETTPSPSNDTGN) is disordered. N-linked (GlcNAc...) asparagine glycosylation is found at Asn-31 and Asn-49. The span at 31–52 (NGSSRTLHSRTETTPSPSNDTG) shows a compositional bias: polar residues. A helical membrane pass occupies residues 58-78 (YIAYALVPVFFIMGLFGVLIC). The Cytoplasmic portion of the chain corresponds to 79–271 (HLLKKKGYRC…PVKRERSGTE (193 aa)). Residues 89–113 (TTEAEQDIEEEKVEKIELNDSVNEN) adopt a coiled-coil conformation. 2 positions are modified to phosphoserine: Ser-109 and Ser-114. Disordered regions lie at residues 145 to 173 (DPESPVTPSTPGSPPVSPGPLSPGGTPGK) and 233 to 271 (VEHKSNQKERRSLMSVSGAETVNGEVPATPVKRERSGTE). Pro residues predominate over residues 155–165 (PGSPPVSPGPL). The span at 233–244 (VEHKSNQKERRS) shows a compositional bias: basic and acidic residues. 2 positions are modified to phosphoserine: Ser-244 and Ser-247.

Belongs to the RELT family. Interacts with RELT, RELL2 and OXSR1. Interacts with PLSCR1. Post-translationally, phosphorylated in vitro by OXSR1. As to expression, widely expressed. Expressed at highest levels in the placenta, skeletal muscle, spleen and testis.

The protein resides in the cell membrane. In terms of biological role, induces activation of MAPK14/p38 cascade, when overexpressed. Induces apoptosis, when overexpressed. In Homo sapiens (Human), this protein is RELT-like protein 1 (RELL1).